We begin with the raw amino-acid sequence, 450 residues long: Probable ECA polymerase (450 aa).

11 helical membrane passes run 6 to 26, 37 to 57, 63 to 83, 118 to 138, 155 to 175, 181 to 201, 207 to 227, 228 to 248, 341 to 361, 378 to 398, and 410 to 430; these read FSGLFVVWLLCTLFIATLTWF, VFFSLLFLLTFFFGFPLTSVL, VGVAPPEILLQALLSAGCFYA, VILMGIALVSVGIFFMHNGFL, GVALKRFFYFFIPAMLVVYFL, AWLFFLVSTVAFGLLTYMIVG, IIIAFAIFLFIGIIRGWISLW, MLAAAGVLGIVGMFWLALKRY, LVVMGGALFIPLGAIVVGLII, YKAAILHSFCFGAIFNMIVLA, and VFFIVVFGACLMIAKLLYWLF.

This sequence belongs to the WzyE family. Probably part of a complex composed of WzxE, WzyE and WzzE.

It is found in the cell inner membrane. It participates in bacterial outer membrane biogenesis; enterobacterial common antigen biosynthesis. Functionally, probably involved in the polymerization of enterobacterial common antigen (ECA) trisaccharide repeat units. The protein is Probable ECA polymerase of Escherichia coli O139:H28 (strain E24377A / ETEC).